Consider the following 3907-residue polypeptide: A-kinase anchor protein 9 (3907 aa).

Basic and acidic residues predominate over residues M1–K14. A disordered region spans residues M1–I57. Positions K34–S44 are enriched in basic residues. Positions S45–N56 are enriched in basic and acidic residues. Coiled coils occupy residues D152–L902, E932–Q1010, Q1088–K1173, E1241–N1268, K1324–V1380, V1422–V1447, and S1573–N1647. The residue at position 153 (S153) is a Phosphoserine. At S1327 the chain carries Phosphoserine. The span at S1682–Q1692 shows a compositional bias: low complexity. The segment at S1682 to P1713 is disordered. A compositionally biased stretch (basic and acidic residues) spans Q1698–D1711. S1765 bears the Phosphoserine mark. Coiled coils occupy residues N1845–I2443, E2532–E2549, Q2591–A2764, L3061–R3088, E3120–E3466, and S3583–L3685. A PKA-RII subunit binding domain region spans residues N2542–L2555. A disordered region spans residues R3377–M3405. A phosphoserine mark is found at S3690, S3842, S3865, and S3897.

In terms of assembly, interacts with the regulatory region of protein kinase N (PKN), protein phosphatase 2A (PP2A), protein phosphatase 1 (PP1) and the immature non-phosphorylated form of PKC epsilon. Interacts with CIP4 and FNBP1. Interacts with chloride intracellular channel proteins CLIC1, CLIC4 and CLIC5. CSNK1D binding promotes its centrosomal subcellular location. Interacts with GM130/GOLGA2; leading to recruitment to the Golgi apparatus. Interacts with KCNQ1; targets protein kinase A (PKA) catalytic and regulatory subunits and protein phosphatase 1 (PP1), to the heterodimer KCNQ1-KCNE1. Interacts with PDE4DIP isoform 13/MMG8/SMYLE; this interaction stabilizes both proteins. In complex with PDE4DIP isoform 13, recruits CAMSAP2 to the Golgi apparatus. Forms a pericentrosomal complex with CDK5RAP2, EB1/MAPRE1 and PDE4DIP isoform 13; within this complex, MAPRE1 binding to CDK5RAP2 may be mediated by PDE4DIP. Interacts with MAPRE1 and MAPRE3. Interacts (via C-terminus) with CAMSAP2; this interaction is much stronger in the presence of PDE4DIP isoform 13/MMG8/SMYLE. Interacts with CAMSAP3. Interacts (via C-terminus) with the gamma-tubulin ring complex (gamma-TuRC), composed of gamma-tubulin, TUBGCP2, TUBGCP3, TUBGCP4, TUBGCP5 and TUBGCP6. As to expression, widely expressed. Isoform 4: Highly expressed in skeletal muscle and in pancreas.

It localises to the golgi apparatus. The protein resides in the cytoplasm. The protein localises to the cytoskeleton. It is found in the microtubule organizing center. Its subcellular location is the centrosome. Its function is as follows. Scaffolding protein that assembles several protein kinases and phosphatases on the centrosome and Golgi apparatus. Required to maintain the integrity of the Golgi apparatus. Required for microtubule nucleation at the cis-side of the Golgi apparatus. Required for association of the centrosomes with the poles of the bipolar mitotic spindle during metaphase. In complex with PDE4DIP isoform 13/MMG8/SMYLE, recruits CAMSAP2 to the Golgi apparatus and tethers non-centrosomal minus-end microtubules to the Golgi, an important step for polarized cell movement. In complex with PDE4DIP isoform 13/MMG8/SMYLE, EB1/MAPRE1 and CDK5RAP2, contributes to microtubules nucleation and extension also from the centrosome to the cell periphery. Functionally, associated with the N-methyl-D-aspartate receptor and is specifically found in the neuromuscular junction (NMJ) as well as in neuronal synapses, suggesting a role in the organization of postsynaptic specializations. This Homo sapiens (Human) protein is A-kinase anchor protein 9 (AKAP9).